Here is a 566-residue protein sequence, read N- to C-terminus: MOB kinase activator-like 2 (566 aa).

Disordered regions lie at residues 28–57 (ADAT…SSLS) and 74–118 (GRAV…GAQA). Residues 35-57 (SSTAPQTPTASTPRPSSSHSSLS) show a composition bias toward low complexity. Residues 85-115 (QNGGKGNASGAGGGAGGGGAGGASGGTGGTG) are compositionally biased toward gly residues. The Zn(2+) site is built by C209, C214, H289, and H294. Disordered stretches follow at residues 346–407 (GGCQ…SASA) and 498–541 (FSNN…QCNA). The segment covering 367 to 388 (LQHQSLQQQQQHHNSSSNSTSS) has biased composition (low complexity). Positions 394–407 (VNSQSNNGSTSASA) are enriched in polar residues. Positions 498–507 (FSNNNNNNHN) are enriched in low complexity. Residues 508 to 526 (LNHHHHHHHHHGHHGHHHA) show a composition bias toward basic residues.

It belongs to the MOB1/phocein family. In terms of assembly, interacts with and activates trc, also interacts with wts.

The protein resides in the cytoplasm. It is found in the nucleus. Functionally, required for the normal morphogenesis of a variety of polarized outgrowths including epidermal hairs, bristles, arista laterals, and dendrites. This is MOB kinase activator-like 2 (Mob2) from Drosophila melanogaster (Fruit fly).